We begin with the raw amino-acid sequence, 237 residues long: Small ribosomal subunit protein uS5 (237 aa).

Residues 1-59 are disordered; it reads MADETNLEGVAAVEATGGEPQREGRGRGRGRGGNDRGGERGGRGRRDDRRGRGNNDEEG. Positions 20–55 are enriched in basic and acidic residues; that stretch reads PQREGRGRGRGRGGNDRGGERGGRGRRDDRRGRGNN. The region spanning 63 to 126 is the S5 DRBM domain; it reads LIEKLVHINR…AAAKRAMVRV (64 aa).

This sequence belongs to the universal ribosomal protein uS5 family. In terms of assembly, part of the 30S ribosomal subunit. Contacts proteins S4 and S8.

Functionally, with S4 and S12 plays an important role in translational accuracy. In terms of biological role, located at the back of the 30S subunit body where it stabilizes the conformation of the head with respect to the body. The chain is Small ribosomal subunit protein uS5 from Novosphingobium aromaticivorans (strain ATCC 700278 / DSM 12444 / CCUG 56034 / CIP 105152 / NBRC 16084 / F199).